Reading from the N-terminus, the 493-residue chain is Glutamyl-tRNA(Gln) amidotransferase subunit A (493 aa).

Residues Lys81 and Ser156 each act as charge relay system in the active site. The Acyl-ester intermediate role is filled by Ser180.

This sequence belongs to the amidase family. GatA subfamily. As to quaternary structure, heterotrimer of A, B and C subunits.

It carries out the reaction L-glutamyl-tRNA(Gln) + L-glutamine + ATP + H2O = L-glutaminyl-tRNA(Gln) + L-glutamate + ADP + phosphate + H(+). Its function is as follows. Allows the formation of correctly charged Gln-tRNA(Gln) through the transamidation of misacylated Glu-tRNA(Gln) in organisms which lack glutaminyl-tRNA synthetase. The reaction takes place in the presence of glutamine and ATP through an activated gamma-phospho-Glu-tRNA(Gln). This Mycobacterium avium (strain 104) protein is Glutamyl-tRNA(Gln) amidotransferase subunit A.